The primary structure comprises 994 residues: MKAVRSDKTTQAATTAQAQKPAKAGSSKIKIVTAAPQAANASARQPASAQAPAPKANGRTREDKDHPLFQDIRYLGRLLGDVLREQEGDAVFDVVETIRQTAVRFRREDDSAAAQTLDKKLRSLSPEQTVSVVRAFSYFSHLANIAEDRHRNRRHRIHELAGSTSQPGTIAHSLERLVEAGAAATPVLQEFFNNALIVPVLTAHPTEVQRKSILDAQHDVARLLAERDQQLTDRERAHNEAMLRARVTSLWQTRMLRDSRLSVADEIENALSYYRATFLEEIPALYADIEEALAEHGLEARLPPFFQMGSWIGGDRDGNPNVTAETLENAITRQAAVIFEHYMEQVHKLGAELSVSNLLAGASDALKELAAVSPDQSPHRTDEPYRRALIGMYTRLAASARVRLGEGSVPVRSAGRGAAPVRAKPYADSAEFVRDLHVLIDSLAEHHGAPLAAPRLSPLARAAEVFGFHLASIDLRQSSDVHEAVITELLRRAGVEENYAELPEADKLNVLLSELAQPRPLRLPFAEYSDLVKSELGVLEEARVTREKFGARAVRNYIISHTETVSDLVEVMLLQKETGLLRGCLGNANDPAQAGLMVIPLFETIPDLRNAPHIMRDLIALPGVDALIEHQGNEQEVMLGYSDSNKDGGFLTSNWELYRAELALVSLFNERGVTLRLFHGRGGTVGRGGGPTYQAILSQPPGTVDGQIRLTEQGEVIASKFGNPEIGRRNLETVVAATLEASLLPHGIAPAQLPAFEETMQQLSDAAMASYRALVYETPGFKEYFFESTPISEIAELNIGSRPASRKLQDPKQRKIEDLRAIPWGFSWGQCRLLLTGWYGFGSAVAAHLDSAPSDAERTRRLALLKKMHKTWPFFANLLSNMDMVLAKTDLAVASRYAALVSDKKLRKHVFERIVAEWERTSKVLSEITGKSERLAENPLLARSIKNRFPYLDPLNHLQVELLKRHRAGDTNARVRRGIHLSINGIAAGLRNTG.

A disordered region spans residues 1–67 (MKAVRSDKTT…GRTREDKDHP (67 aa)). Composition is skewed to low complexity over residues 9-24 (TTQAATTAQAQKPAKA) and 34-57 (AAPQAANASARQPASAQAPAPKAN). Residues histidine 204 and lysine 646 contribute to the active site.

It belongs to the PEPCase type 1 family. It depends on Mg(2+) as a cofactor.

It catalyses the reaction oxaloacetate + phosphate = phosphoenolpyruvate + hydrogencarbonate. Its function is as follows. Forms oxaloacetate, a four-carbon dicarboxylic acid source for the tricarboxylic acid cycle. The protein is Phosphoenolpyruvate carboxylase of Paraburkholderia xenovorans (strain LB400).